Reading from the N-terminus, the 50-residue chain is Insulin (50 aa).

3 disulfide bridges follow: C7–C36, C19–C49, and C35–C40.

The protein belongs to the insulin family. Heterodimer of a B chain and an A chain linked by two disulfide bonds.

Its subcellular location is the secreted. Functionally, insulin decreases blood glucose concentration. It increases cell permeability to monosaccharides, amino acids and fatty acids. It accelerates glycolysis, the pentose phosphate cycle, and glycogen synthesis in liver. This Katsuwonus pelamis (Skipjack tuna) protein is Insulin (ins).